Consider the following 152-residue polypeptide: Transcriptional repressor NrdR (152 aa).

A zinc finger spans residues 3 to 34 (CPSCQHNGTRVLDSRPVDDGKSIRRRRECESC). One can recognise an ATP-cone domain in the interval 49-139 (LIVVKKEGVR…VYRQFKDINV (91 aa)).

Belongs to the NrdR family. Zn(2+) is required as a cofactor.

Negatively regulates transcription of bacterial ribonucleotide reductase nrd genes and operons by binding to NrdR-boxes. This Bacillus subtilis (strain 168) protein is Transcriptional repressor NrdR.